The chain runs to 238 residues: Cysteine-rich venom protein natrin-2 (238 aa).

The signal sequence occupies residues 1–19; sequence MIAFIVLLSLAAVLQQSSG. Positions 38–164 constitute an SCP domain; it reads VDKHNALRRS…SSKYLYVCQY (127 aa). Intrachain disulfides connect Cys75–Cys153, Cys92–Cys165, Cys148–Cys162, Cys184–Cys191, Cys187–Cys196, Cys200–Cys233, Cys209–Cys227, and Cys218–Cys231. In terms of domain architecture, ShKT spans 200-233; the sequence is CKHHNVFSNCQSLAKQNACQTEWMKSKCAASCFC.

As to expression, expressed by the venom gland.

The protein localises to the secreted. Functionally, inhibits carbachol-induced muscle contraction and weakly blocks muscle contraction evoked by potassium. The polypeptide is Cysteine-rich venom protein natrin-2 (Naja atra (Chinese cobra)).